Here is a 201-residue protein sequence, read N- to C-terminus: Large ribosomal subunit protein uL4 (201 aa).

Residues 43-69 (TKAQKTRSEVAGGGKKPWRQKGTGRAR) are disordered.

It belongs to the universal ribosomal protein uL4 family. In terms of assembly, part of the 50S ribosomal subunit.

One of the primary rRNA binding proteins, this protein initially binds near the 5'-end of the 23S rRNA. It is important during the early stages of 50S assembly. It makes multiple contacts with different domains of the 23S rRNA in the assembled 50S subunit and ribosome. Functionally, forms part of the polypeptide exit tunnel. This Idiomarina loihiensis (strain ATCC BAA-735 / DSM 15497 / L2-TR) protein is Large ribosomal subunit protein uL4.